Consider the following 87-residue polypeptide: uncharacterized protein (87 aa).

Residues Met-1–Ala-23 form the signal peptide. A disordered region spans residues Asp-24 to Asp-44.

The protein resides in the secreted. This is an uncharacterized protein from Homo sapiens (Human).